The following is a 414-amino-acid chain: tRNA N6-adenosine threonylcarbamoyltransferase, mitochondrial (414 aa).

Residues 1-29 (MLMLSKTAGAIPRPPRSNVRGFIRRFNVQ) constitute a mitochondrion transit peptide. Residues K74 and K140 each carry the N6-acetyllysine modification. A divalent metal cation is bound by residues H147 and H151. Substrate-binding positions include 169–173 (LISGG) and D202. K203 is subject to N6-acetyllysine. 2 residues coordinate substrate: G222 and E226. N6-acetyllysine is present on residues K230 and K299. Substrate-binding positions include 329-330 (SN) and T357. D358 contacts a divalent metal cation.

Belongs to the KAE1 / TsaD family. Monomer. Requires a divalent metal cation as cofactor.

The protein localises to the mitochondrion. The catalysed reaction is L-threonylcarbamoyladenylate + adenosine(37) in tRNA = N(6)-L-threonylcarbamoyladenosine(37) in tRNA + AMP + H(+). In terms of biological role, required for the formation of a threonylcarbamoyl group on adenosine at position 37 (t(6)A37) in mitochondrial tRNAs that read codons beginning with adenine. Probably involved in the transfer of the threonylcarbamoyl moiety of threonylcarbamoyl-AMP (TC-AMP) to the N6 group of A37. Involved in mitochondrial genome maintenance. In Rattus norvegicus (Rat), this protein is tRNA N6-adenosine threonylcarbamoyltransferase, mitochondrial.